The primary structure comprises 240 residues: Late expression factor 5 homolog (240 aa).

The protein belongs to the baculoviridae LEF-5 family.

In terms of biological role, required for late and very late gene expression. This Tortricidae (ClGV) protein is Late expression factor 5 homolog.